A 303-amino-acid polypeptide reads, in one-letter code: Nucleotide-binding protein SAB0719 (303 aa).

18–25 contributes to the ATP binding site; sequence GLSGAGKS. 69–72 contributes to the GTP binding site; sequence DLRG.

It belongs to the RapZ-like family.

Displays ATPase and GTPase activities. The chain is Nucleotide-binding protein SAB0719 from Staphylococcus aureus (strain bovine RF122 / ET3-1).